A 281-amino-acid polypeptide reads, in one-letter code: 4-hydroxy-3-methylbut-2-enyl diphosphate reductase (281 aa).

C12 is a binding site for [4Fe-4S] cluster. Positions 41 and 74 each coordinate (2E)-4-hydroxy-3-methylbut-2-enyl diphosphate. H41 and H74 together coordinate dimethylallyl diphosphate. H41 and H74 together coordinate isopentenyl diphosphate. A [4Fe-4S] cluster-binding site is contributed by C96. Position 124 (H124) interacts with (2E)-4-hydroxy-3-methylbut-2-enyl diphosphate. H124 is a binding site for dimethylallyl diphosphate. H124 contacts isopentenyl diphosphate. E126 functions as the Proton donor in the catalytic mechanism. (2E)-4-hydroxy-3-methylbut-2-enyl diphosphate is bound at residue T164. [4Fe-4S] cluster is bound at residue C193. Positions 221, 223, and 265 each coordinate (2E)-4-hydroxy-3-methylbut-2-enyl diphosphate. Dimethylallyl diphosphate-binding residues include S221, N223, and S265. S221, N223, and S265 together coordinate isopentenyl diphosphate.

The protein belongs to the IspH family. The cofactor is [4Fe-4S] cluster.

It catalyses the reaction isopentenyl diphosphate + 2 oxidized [2Fe-2S]-[ferredoxin] + H2O = (2E)-4-hydroxy-3-methylbut-2-enyl diphosphate + 2 reduced [2Fe-2S]-[ferredoxin] + 2 H(+). It carries out the reaction dimethylallyl diphosphate + 2 oxidized [2Fe-2S]-[ferredoxin] + H2O = (2E)-4-hydroxy-3-methylbut-2-enyl diphosphate + 2 reduced [2Fe-2S]-[ferredoxin] + 2 H(+). The protein operates within isoprenoid biosynthesis; dimethylallyl diphosphate biosynthesis; dimethylallyl diphosphate from (2E)-4-hydroxy-3-methylbutenyl diphosphate: step 1/1. It functions in the pathway isoprenoid biosynthesis; isopentenyl diphosphate biosynthesis via DXP pathway; isopentenyl diphosphate from 1-deoxy-D-xylulose 5-phosphate: step 6/6. Its function is as follows. Catalyzes the conversion of 1-hydroxy-2-methyl-2-(E)-butenyl 4-diphosphate (HMBPP) into a mixture of isopentenyl diphosphate (IPP) and dimethylallyl diphosphate (DMAPP). Acts in the terminal step of the DOXP/MEP pathway for isoprenoid precursor biosynthesis. In Nitratidesulfovibrio vulgaris (strain DSM 19637 / Miyazaki F) (Desulfovibrio vulgaris), this protein is 4-hydroxy-3-methylbut-2-enyl diphosphate reductase.